A 438-amino-acid chain; its full sequence is Mitochondrial distribution and morphology protein 12 (438 aa).

The region spanning 1–438 (MSIEVDWAAA…VYPSFWTFLV (438 aa)) is the SMP-LTD domain. 3 disordered regions span residues 110 to 154 (SFSH…TSTL), 185 to 277 (SDSG…MRER), and 353 to 379 (GSEQSQGSQNPSDDGRPRSGGDQKDKE). Residues 212 to 226 (DTTNSTSRPSTANTL) show a composition bias toward polar residues. Residues 227-245 (PSHPSLGHSGSSGSNPHTS) show a composition bias toward low complexity. Residues 354-364 (SEQSQGSQNPS) are compositionally biased toward polar residues. A compositionally biased stretch (basic and acidic residues) spans 365 to 379 (DDGRPRSGGDQKDKE).

It belongs to the MDM12 family. In terms of assembly, component of the ER-mitochondria encounter structure (ERMES) or MDM complex, composed of mmm1, mdm10, mdm12 and mdm34. A mmm1 homodimer associates with one molecule of mdm12 on each side in a pairwise head-to-tail manner, and the SMP-LTD domains of mmm1 and mdm12 generate a continuous hydrophobic tunnel for phospholipid trafficking.

The protein resides in the mitochondrion outer membrane. It localises to the endoplasmic reticulum membrane. Its function is as follows. Component of the ERMES/MDM complex, which serves as a molecular tether to connect the endoplasmic reticulum (ER) and mitochondria. Components of this complex are involved in the control of mitochondrial shape and protein biogenesis, and function in nonvesicular lipid trafficking between the ER and mitochondria. Mdm12 is required for the interaction of the ER-resident membrane protein mmm1 and the outer mitochondrial membrane-resident beta-barrel protein mdm10. The mdm12-mmm1 subcomplex functions in the major beta-barrel assembly pathway that is responsible for biogenesis of all mitochondrial outer membrane beta-barrel proteins, and acts in a late step after the SAM complex. The mdm10-mdm12-mmm1 subcomplex further acts in the TOM40-specific pathway after the action of the mdm12-mmm1 complex. Essential for establishing and maintaining the structure of mitochondria and maintenance of mtDNA nucleoids. This Penicillium rubens (strain ATCC 28089 / DSM 1075 / NRRL 1951 / Wisconsin 54-1255) (Penicillium chrysogenum) protein is Mitochondrial distribution and morphology protein 12.